The following is a 142-amino-acid chain: Large ribosomal subunit protein uL13 (142 aa).

Belongs to the universal ribosomal protein uL13 family. Part of the 50S ribosomal subunit.

This protein is one of the early assembly proteins of the 50S ribosomal subunit, although it is not seen to bind rRNA by itself. It is important during the early stages of 50S assembly. The protein is Large ribosomal subunit protein uL13 of Erwinia tasmaniensis (strain DSM 17950 / CFBP 7177 / CIP 109463 / NCPPB 4357 / Et1/99).